The primary structure comprises 339 residues: MRVYYDRDADVNLIKGKKVAIIGYGSQGHAHALNLRDSGVKEVAVALRAGSATAKKAEGEGLKVMTVADAAKWADVLMMLTPDELQADIYYADLHENMKPGSALLFAHGLNIHFNLIEPRKDIDVLMVAPKGPGHTVRSEYKRGGGVPSLIAVHQDATGNAHDVGLSYASANGGGRAGIIETTFREECETDLFGEQVVLCGGLVELIRAGFETLTEAGYAPEMAYFECLHEVKLIVDLIYEGGIANMNYSISNTAEYGEYVTGPRIITPETKAEMKRVLHDIQSGKFTRDWMLENKVNQTSFKATRAAAAAHPIEEVGARLREMMPWISANKLVDKAKN.

The KARI N-terminal Rossmann domain occupies 1 to 182 (MRVYYDRDAD…GGGRAGIIET (182 aa)). Residues 24 to 27 (YGSQ), Arg48, Ser51, Thr53, and 83 to 86 (DELQ) contribute to the NADP(+) site. Residue His108 is part of the active site. Gly134 is an NADP(+) binding site. In terms of domain architecture, KARI C-terminal knotted spans 183–328 (TFREECETDL…ARLREMMPWI (146 aa)). Mg(2+)-binding residues include Asp191, Glu195, Glu227, and Glu231. Ser252 provides a ligand contact to substrate.

This sequence belongs to the ketol-acid reductoisomerase family. It depends on Mg(2+) as a cofactor.

The enzyme catalyses (2R)-2,3-dihydroxy-3-methylbutanoate + NADP(+) = (2S)-2-acetolactate + NADPH + H(+). It carries out the reaction (2R,3R)-2,3-dihydroxy-3-methylpentanoate + NADP(+) = (S)-2-ethyl-2-hydroxy-3-oxobutanoate + NADPH + H(+). It functions in the pathway amino-acid biosynthesis; L-isoleucine biosynthesis; L-isoleucine from 2-oxobutanoate: step 2/4. Its pathway is amino-acid biosynthesis; L-valine biosynthesis; L-valine from pyruvate: step 2/4. Functionally, involved in the biosynthesis of branched-chain amino acids (BCAA). Catalyzes an alkyl-migration followed by a ketol-acid reduction of (S)-2-acetolactate (S2AL) to yield (R)-2,3-dihydroxy-isovalerate. In the isomerase reaction, S2AL is rearranged via a Mg-dependent methyl migration to produce 3-hydroxy-3-methyl-2-ketobutyrate (HMKB). In the reductase reaction, this 2-ketoacid undergoes a metal-dependent reduction by NADPH to yield (R)-2,3-dihydroxy-isovalerate. The sequence is that of Ketol-acid reductoisomerase (NADP(+)) from Parvibaculum lavamentivorans (strain DS-1 / DSM 13023 / NCIMB 13966).